Consider the following 85-residue polypeptide: Large ribosomal subunit protein bL27 (85 aa).

Residues 1-20 (MAHKKAGGSTRNGRDSESKR) form a disordered region.

Belongs to the bacterial ribosomal protein bL27 family.

In Yersinia pseudotuberculosis serotype O:1b (strain IP 31758), this protein is Large ribosomal subunit protein bL27.